A 386-amino-acid polypeptide reads, in one-letter code: MNIHEYQGKAVLRSYGVSVPNGKVAFTVEEAVEAAKELGTDVCVVKAQIHAGGRGKAGGVKVAKNLDEVRTYAESILGTTLVTHQTGPEGKEVKRLLIEEGCDIKKEYYVGLVLDRATSQVVLMASEEGGTEIEEVAEKTPEKIFKEYIDPAVGLQGFQARRIAFNINIPKELVGQAVKFMMGLYRAFIEKDCSIAEINPLVTTGDGKVMALDAKLNFDSNALYRHKDILELRDLDEEDAKEIEASKYDLNYIPLDGNIGCMVNGAGLAMATMDIIKHYHGDPANFLDVGGGATAEKVTEAFKIILSDKNVKGIFVNIFGGIMKCDVIAEGVIEATKQVGLELPLVVRLEGTNVELGKKILNESGLNIVAAESMADGAQKIVSLVG.

One can recognise an ATP-grasp domain in the interval 9–244; sequence KAVLRSYGVS…LDEEDAKEIE (236 aa). ATP-binding positions include lysine 46, 53–55, glutamate 99, cysteine 102, and glutamate 107; that span reads GRG. Residues asparagine 199 and aspartate 213 each contribute to the Mg(2+) site. Substrate contacts are provided by residues asparagine 264 and 321–323; that span reads GIM.

The protein belongs to the succinate/malate CoA ligase beta subunit family. In terms of assembly, heterotetramer of two alpha and two beta subunits. Mg(2+) is required as a cofactor.

It catalyses the reaction succinate + ATP + CoA = succinyl-CoA + ADP + phosphate. It carries out the reaction GTP + succinate + CoA = succinyl-CoA + GDP + phosphate. It functions in the pathway carbohydrate metabolism; tricarboxylic acid cycle; succinate from succinyl-CoA (ligase route): step 1/1. Succinyl-CoA synthetase functions in the citric acid cycle (TCA), coupling the hydrolysis of succinyl-CoA to the synthesis of either ATP or GTP and thus represents the only step of substrate-level phosphorylation in the TCA. The beta subunit provides nucleotide specificity of the enzyme and binds the substrate succinate, while the binding sites for coenzyme A and phosphate are found in the alpha subunit. The polypeptide is Succinate--CoA ligase [ADP-forming] subunit beta (Bacillus thuringiensis (strain Al Hakam)).